An 871-amino-acid chain; its full sequence is DNA mismatch repair protein MutS (871 aa).

620 to 627 (GPNMGGKS) serves as a coordination point for ATP. The interval 806-837 (HHGGLNEPKQATMELTPPPEAIPSHTEKRNPL) is disordered.

This sequence belongs to the DNA mismatch repair MutS family.

In terms of biological role, this protein is involved in the repair of mismatches in DNA. It is possible that it carries out the mismatch recognition step. This protein has a weak ATPase activity. This chain is DNA mismatch repair protein MutS, found in Idiomarina loihiensis (strain ATCC BAA-735 / DSM 15497 / L2-TR).